The sequence spans 148 residues: Wheatwin-2 (148 aa).

The first 23 residues, Met1–Ala23, serve as a signal peptide directing secretion. Gln24 bears the Pyrrolidone carboxylic acid mark. Positions Gln24–Asp148 constitute a Barwin domain. Cystine bridges form between Cys54–Cys86, Cys75–Cys109, and Cys89–Cys146.

As to quaternary structure, monomer.

In terms of biological role, shows antifungal activity towards B.cinerea and towards the wheat-specific pathogenic fungi F.culmorum and F.graminearum (groups 1 and 2). The polypeptide is Wheatwin-2 (PR4B) (Triticum aestivum (Wheat)).